The chain runs to 432 residues: Adenosylhomocysteinase (432 aa).

T57, D131, and E156 together coordinate substrate. An NAD(+)-binding site is contributed by 157–159 (TTT). Phosphoserine is present on S183. Substrate contacts are provided by K186 and D190. K186 carries the N6-(2-hydroxyisobutyryl)lysine modification. Y193 is subject to Phosphotyrosine. Residues 222–227 (GDVGKG), E243, N248, 299–301 (IGH), N346, H353, K426, 426–430 (KPDHY), and Y430 each bind NAD(+).

Belongs to the adenosylhomocysteinase family. Homotetramer. Interaction with AHCYL1. Requires NAD(+) as cofactor.

It is found in the cytoplasm. The protein localises to the melanosome. The protein resides in the nucleus. It localises to the endoplasmic reticulum. It catalyses the reaction S-adenosyl-L-homocysteine + H2O = L-homocysteine + adenosine. Its pathway is amino-acid biosynthesis; L-homocysteine biosynthesis; L-homocysteine from S-adenosyl-L-homocysteine: step 1/1. Catalyzes the hydrolysis of S-adenosyl-L-homocysteine to form adenosine and homocysteine. Binds copper ions. This is Adenosylhomocysteinase (Ahcy) from Rattus norvegicus (Rat).